The sequence spans 171 residues: uncharacterized protein (171 aa).

To M.jannaschii MJ0417.

This is an uncharacterized protein from Methanocaldococcus jannaschii (strain ATCC 43067 / DSM 2661 / JAL-1 / JCM 10045 / NBRC 100440) (Methanococcus jannaschii).